Here is a 401-residue protein sequence, read N- to C-terminus: Putative F-box/FBD/LRR-repeat protein At3g23955 (401 aa).

One can recognise an F-box domain in the interval 56–102; sequence VPARFQLPDPLLTQILNHLPTEEAVKTSVLSTRWRTLWLWVHNLELS. LRR repeat units follow at residues 128–152 and 275–296; these read IESLKLSLDGNDASYLKPWIDAFVK and MSSLYITLNASDLKWFPIFLRS. The 53-residue stretch at 321 to 373 folds into the FBD domain; the sequence is IKRVSISSVPECLLSSLEFVEFKAPICGLAPEMMLVWYFLENSPTLKKLTLRL.

This is Putative F-box/FBD/LRR-repeat protein At3g23955 from Arabidopsis thaliana (Mouse-ear cress).